The following is a 972-amino-acid chain: Aminopeptidase N (972 aa).

The Cytoplasmic segment spans residues 2–17 (TSQGRTRTLLNLTPIR). The helical; Signal-anchor for type II membrane protein transmembrane segment at 18–39 (LIVALFLVAAAVGLSIGLTYYF) threads the bilayer. The Extracellular segment spans residues 40–972 (TRKAFDTSEK…LAAFFKKATL (933 aa)). A compositionally biased stretch (basic and acidic residues) spans 47 to 62 (SEKPGKDDTGGKDKDN). The segment at 47–66 (SEKPGKDDTGGKDKDNSPSA) is disordered. A glycan (N-linked (GlcNAc...) asparagine) is linked at asparagine 99. Glutamate 208 contributes to the substrate binding site. N-linked (GlcNAc...) asparagine glycosylation occurs at asparagine 227. 343–347 (GAMEN) contacts substrate. Histidine 379 contacts Zn(2+). Glutamate 380 serves as the catalytic Proton acceptor. The Zn(2+) site is built by histidine 383 and glutamate 402. N-linked (GlcNAc...) asparagine glycosylation occurs at asparagine 549. 2 disulfides stabilise this stretch: cysteine 759–cysteine 766 and cysteine 804–cysteine 840. Residue asparagine 858 is glycosylated (N-linked (GlcNAc...) asparagine).

The protein belongs to the peptidase M1 family. The cofactor is Zn(2+).

The protein resides in the membrane. The catalysed reaction is Release of an N-terminal amino acid, Xaa-|-Yaa- from a peptide, amide or arylamide. Xaa is preferably Ala, but may be most amino acids including Pro (slow action). When a terminal hydrophobic residue is followed by a prolyl residue, the two may be released as an intact Xaa-Pro dipeptide.. The protein is Aminopeptidase N of Haemonchus contortus (Barber pole worm).